The primary structure comprises 215 residues: LexA repressor (215 aa).

Residues 29-49 constitute a DNA-binding region (H-T-H motif); that stretch reads VREICSAVGFKSTSTVHSYLQ. Catalysis depends on for autocatalytic cleavage activity residues serine 138 and lysine 175.

This sequence belongs to the peptidase S24 family. As to quaternary structure, homodimer.

It carries out the reaction Hydrolysis of Ala-|-Gly bond in repressor LexA.. In terms of biological role, represses a number of genes involved in the response to DNA damage (SOS response), including recA and lexA. In the presence of single-stranded DNA, RecA interacts with LexA causing an autocatalytic cleavage which disrupts the DNA-binding part of LexA, leading to derepression of the SOS regulon and eventually DNA repair. The sequence is that of LexA repressor from Ruminiclostridium cellulolyticum (strain ATCC 35319 / DSM 5812 / JCM 6584 / H10) (Clostridium cellulolyticum).